Consider the following 398-residue polypeptide: Yellow-related salivary protein SP04 (398 aa).

The signal sequence occupies residues 1–18 (MKWFLFLLSTIFVQGILG). The segment at 73-94 (TLTEIERKKHPERSPPLSKFSG) is disordered. The span at 75 to 85 (TEIERKKHPER) shows a compositional bias: basic and acidic residues.

It belongs to the major royal jelly protein family. Female salivary gland (at protein level).

It localises to the secreted. Its function is as follows. Probably modulates blood feeding of sand flies on vertebrate species by binding and sequestering different mediators involved in the host response. Binds biogenic amines. Binds serotonin with high affinity. Binds histamine with low affinity. The protein is Yellow-related salivary protein SP04 of Phlebotomus argentipes (Phlebotomine sand fly).